We begin with the raw amino-acid sequence, 84 residues long: Insulin-like peptide 05 (84 aa).

Positions 1 to 22 (MKTPILFVVVVAVLIVTDSAEG) are cleaved as a signal peptide. The propeptide occupies 23–37 (FKGKANSFLKPLQRR). Cystine bridges form between Cys-43–Cys-48, Cys-44–Cys-73, and Cys-57–Cys-61.

It belongs to the insulin family.

Its subcellular location is the secreted. In terms of biological role, insulin decreases blood glucose concentration. May have evolved to activate insulin receptors (INSR) in vertebrates. Molecular docking studies reveals unique interaction with the human insulin receptor. In vivo, insulin-like peptide injection reduces blood glucose levels in two models of zebrafish diabetes (streptozotocin- and glucose-induced). Also shorter swimming distance of zebrafish larvae, an effect which is not observed with human insulin. The sequence is that of Insulin-like peptide 05 from Exaiptasia diaphana (Tropical sea anemone).